The primary structure comprises 1041 residues: Protein EGT2 (1041 aa).

The first 20 residues, 1-20, serve as a signal peptide directing secretion; it reads MNKLLLHLVRVISILGLANA. N-linked (GlcNAc...) asparagine glycosylation is found at N65, N103, N161, N175, N249, N332, N401, N435, N465, N485, N506, N526, N544, and N556. Positions 388 to 410 are disordered; sequence SSSSISLSAPSSSNSTFTTPSSS. Copy 1 of the repeat occupies 457–492; sequence SSTLSYTSNVTISVSSATQHTTTPSYVSNSTTLSSS. Residues 457–962 form a 9 X approximate repeats region; the sequence is SSTLSYTSNV…TLKTSTFQKA (506 aa). 2 consecutive repeat copies span residues 577–606 and 613–647. Residues N635, N636, N657, and N709 are each glycosylated (N-linked (GlcNAc...) asparagine). The stretch at 716–745 is repeat 4; it reads TDKSDTYSVISSTESAQVTEYDSLLPISTL. An N-linked (GlcNAc...) asparagine glycan is attached at N756. Repeat copies occupy residues 773-802, 811-840, 849-886, 887-924, and 925-962. A lipid anchor (GPI-anchor amidated glycine) is attached at G1020. Positions 1021 to 1041 are cleaved as a propeptide — removed in mature form; it reads AAGQLTIRIGSLLLGLISFLL.

Post-translationally, the GPI-anchor is attached to the protein in the endoplasmic reticulum and serves to target the protein to the cell surface. There, the glucosamine-inositol phospholipid moiety is cleaved off and the GPI-modified mannoprotein is covalently attached via its lipidless GPI glycan remnant to the 1,6-beta-glucan of the outer cell wall layer.

It is found in the secreted. Its subcellular location is the cell wall. The protein localises to the membrane. Functionally, seems to be involved in the correct timing of cell separation after cytokinesis, as separation of mutant daughter cells is delayed. Could either be an enzyme necessary for glucans-degradation of the cell wall at the neck region between mother and daughter cells or a regulatory protein controlling this metabolic step. The protein is Protein EGT2 (EGT2) of Saccharomyces cerevisiae (strain ATCC 204508 / S288c) (Baker's yeast).